Consider the following 136-residue polypeptide: Protein PsiE homolog (136 aa).

The next 4 membrane-spanning stretches (helical) occupy residues 15 to 35, 55 to 75, 82 to 102, and 108 to 128; these read ILQT…VVFL, YELV…ALIV, FHFP…RLII, and PLDV…LWLC.

The protein belongs to the PsiE family.

The protein localises to the cell inner membrane. The chain is Protein PsiE homolog from Enterobacter sp. (strain 638).